The primary structure comprises 114 residues: MAECPTLGEAVTDHPDRLWAWEKFVYLDEKQHAWLPLTIEIKDRLQLRVLLRREDVVLGRPMTPTQIGPSLLPIMWQLYPDGRYRSSDSSFWRLVYHIKIDGVEDMLLELLPDD.

The protein belongs to the TCL1 family. As to quaternary structure, homodimer. Interacts with AKT1, AKT2 and AKT3 (via PH domain). Interacts with PNPT1; the interaction has no effect on PNPT1 exonuclease activity. Restricted in the T-cell lineage to immature thymocytes and activated peripheral lymphocytes. Preferentially expressed early in T- and B-lymphocyte differentiation.

Its subcellular location is the cytoplasm. The protein resides in the nucleus. It is found in the microsome. The protein localises to the endoplasmic reticulum. Functionally, enhances the phosphorylation and activation of AKT1, AKT2 and AKT3. Promotes nuclear translocation of AKT1. Enhances cell proliferation, stabilizes mitochondrial membrane potential and promotes cell survival. This chain is T-cell leukemia/lymphoma protein 1A (TCL1A), found in Homo sapiens (Human).